Here is a 707-residue protein sequence, read N- to C-terminus: NADP(+)-dependent formate dehydrogenase subunit beta (707 aa).

Heterotetramer composed of two alpha (FdhA) and two beta (FdhB) subunits.

Its subcellular location is the cytoplasm. The enzyme catalyses formate + NADP(+) = CO2 + NADPH. Activity is very sensitive to oxygen. The activity in growing cells is enhanced when selenite and molybdate are added together to the growth medium. Tungstate replaces and is better than molybdate. Selenite is incorporated into the enzyme. Requires a sulfhydryl compound for activity. Inhibited by cyanide, EDTA, hypophosphite and mercaptoethanol. Sulfite inhibits the activity with NADP but not with methyl viologen as electron acceptor. Functionally, component of a dehydrogenase that catalyzes the NADP-dependent reduction of CO(2) to formate, the first step in the synthesis of the methyl group of acetate during synthesis of acetate from CO(2). In vitro, can use methyl viologen and benzyl viologen in addition to its natural electron acceptor. This is NADP(+)-dependent formate dehydrogenase subunit beta from Moorella thermoacetica (Clostridium thermoaceticum).